A 186-amino-acid chain; its full sequence is Threonylcarbamoyl-AMP synthase (186 aa).

The 185-residue stretch at 2–186 (VSNLQQVVKA…ARTEQLLRQG (185 aa)) folds into the YrdC-like domain.

It belongs to the SUA5 family. TsaC subfamily.

Its subcellular location is the cytoplasm. The enzyme catalyses L-threonine + hydrogencarbonate + ATP = L-threonylcarbamoyladenylate + diphosphate + H2O. In terms of biological role, required for the formation of a threonylcarbamoyl group on adenosine at position 37 (t(6)A37) in tRNAs that read codons beginning with adenine. Catalyzes the conversion of L-threonine, HCO(3)(-)/CO(2) and ATP to give threonylcarbamoyl-AMP (TC-AMP) as the acyladenylate intermediate, with the release of diphosphate. The polypeptide is Threonylcarbamoyl-AMP synthase (Vibrio vulnificus (strain CMCP6)).